Here is a 56-residue protein sequence, read N- to C-terminus: MAKKNKNVLVRLVSTAGTGVFWVKKRNPKTQTEKLSFRKYDKVVRKHVIFKEEKIK.

Belongs to the bacterial ribosomal protein bL33 family.

The polypeptide is Large ribosomal subunit protein bL33 (Rickettsia typhi (strain ATCC VR-144 / Wilmington)).